The primary structure comprises 264 residues: Indole-3-glycerol phosphate synthase (264 aa).

This sequence belongs to the TrpC family.

It carries out the reaction 1-(2-carboxyphenylamino)-1-deoxy-D-ribulose 5-phosphate + H(+) = (1S,2R)-1-C-(indol-3-yl)glycerol 3-phosphate + CO2 + H2O. Its pathway is amino-acid biosynthesis; L-tryptophan biosynthesis; L-tryptophan from chorismate: step 4/5. This is Indole-3-glycerol phosphate synthase from Lactococcus lactis subsp. cremoris (strain MG1363).